The chain runs to 72 residues: Translation initiation factor IF-1 (72 aa).

The S1-like domain occupies 1 to 72 (MAKEGAIEVE…TRGRIVYRYK (72 aa)).

Belongs to the IF-1 family. Component of the 30S ribosomal translation pre-initiation complex which assembles on the 30S ribosome in the order IF-2 and IF-3, IF-1 and N-formylmethionyl-tRNA(fMet); mRNA recruitment can occur at any time during PIC assembly.

The protein localises to the cytoplasm. Its function is as follows. One of the essential components for the initiation of protein synthesis. Stabilizes the binding of IF-2 and IF-3 on the 30S subunit to which N-formylmethionyl-tRNA(fMet) subsequently binds. Helps modulate mRNA selection, yielding the 30S pre-initiation complex (PIC). Upon addition of the 50S ribosomal subunit IF-1, IF-2 and IF-3 are released leaving the mature 70S translation initiation complex. The chain is Translation initiation factor IF-1 from Corynebacterium diphtheriae (strain ATCC 700971 / NCTC 13129 / Biotype gravis).